The chain runs to 368 residues: V-type proton ATPase subunit C (368 aa).

The protein belongs to the V-ATPase C subunit family. In terms of assembly, V-ATPase is a heteromultimeric enzyme composed of a peripheral catalytic V1 complex (components A to H) attached to an integral membrane V0 proton pore complex (components: a, c, c', c'' and d).

Functionally, subunit of the peripheral V1 complex of vacuolar ATPase. Subunit C is necessary for the assembly of the catalytic sector of the enzyme and is likely to have a specific function in its catalytic activity. V-ATPase is responsible for acidifying a variety of intracellular compartments in eukaryotic cells. The sequence is that of V-type proton ATPase subunit C (vatC) from Dictyostelium discoideum (Social amoeba).